A 423-amino-acid chain; its full sequence is UDP-N-acetylglucosamine 1-carboxyvinyltransferase (423 aa).

22–23 contacts phosphoenolpyruvate; the sequence is KN. A UDP-N-acetyl-alpha-D-glucosamine-binding site is contributed by R93. Residue C117 is the Proton donor of the active site. C117 is subject to 2-(S-cysteinyl)pyruvic acid O-phosphothioketal. Residues 122–126, D308, and V330 each bind UDP-N-acetyl-alpha-D-glucosamine; that span reads RPVDL.

It belongs to the EPSP synthase family. MurA subfamily.

It localises to the cytoplasm. The catalysed reaction is phosphoenolpyruvate + UDP-N-acetyl-alpha-D-glucosamine = UDP-N-acetyl-3-O-(1-carboxyvinyl)-alpha-D-glucosamine + phosphate. Its pathway is cell wall biogenesis; peptidoglycan biosynthesis. Functionally, cell wall formation. Adds enolpyruvyl to UDP-N-acetylglucosamine. In Finegoldia magna (strain ATCC 29328 / DSM 20472 / WAL 2508) (Peptostreptococcus magnus), this protein is UDP-N-acetylglucosamine 1-carboxyvinyltransferase.